A 1666-amino-acid chain; its full sequence is Probable clathrin heavy chain (1666 aa).

WD40-like repeat regions lie at residues Ser-24–Ser-67, Ala-68–Asp-107, Val-108–Asn-148, Gly-149–Glu-194, Ser-195–Val-255, Asn-256–Glu-299, and Ser-300–Asn-328. Position 392 is a phosphothreonine (Thr-392). The residue at position 393 (Ser-393) is a Phosphoserine. CHCR repeat units lie at residues Met-534–Val-680, Ala-683–Leu-825, Leu-830–Gln-969, Val-975–Ala-1120, Tyr-1124–Ala-1265, Leu-1270–Thr-1415, and Leu-1418–Phe-1561.

The protein belongs to the clathrin heavy chain family. As to quaternary structure, clathrin triskelions, composed of 3 heavy chains and 3 light chains, are the basic subunits of the clathrin coat.

It is found in the cytoplasmic vesicle membrane. The protein resides in the membrane. It localises to the coated pit. Clathrin is the major protein of the polyhedral coat of coated pits and vesicles. The sequence is that of Probable clathrin heavy chain (chc1) from Schizosaccharomyces pombe (strain 972 / ATCC 24843) (Fission yeast).